A 72-amino-acid polypeptide reads, in one-letter code: Gene 42 protein (72 aa).

This is Gene 42 protein (42) from Mycobacterium phage L5 (Mycobacteriophage L5).